The following is a 282-amino-acid chain: Putative 4-diphosphocytidyl-2-C-methyl-D-erythritol kinase (282 aa).

Lys-9 is an active-site residue. An ATP-binding site is contributed by 93–103 (PVSAGLAGGSA). Asp-135 is a catalytic residue.

It belongs to the GHMP kinase family. IspE subfamily.

The enzyme catalyses 4-CDP-2-C-methyl-D-erythritol + ATP = 4-CDP-2-C-methyl-D-erythritol 2-phosphate + ADP + H(+). Functionally, catalyzes the phosphorylation of the position 2 hydroxy group of 4-diphosphocytidyl-2C-methyl-D-erythritol. In Staphylococcus haemolyticus (strain JCSC1435), this protein is Putative 4-diphosphocytidyl-2-C-methyl-D-erythritol kinase.